The primary structure comprises 646 residues: Interferon-induced GTP-binding protein MxA (646 aa).

A Dynamin-type G domain is found at 34 to 307 (DLALPAIAVI…LVHHIQKSLP (274 aa)). Positions 44-51 (GDQSSGKS) are G1 motif. 44 to 51 (GDQSSGKS) is a binding site for GTP. The interval 69 to 71 (VTR) is G2 motif. Residues 145 to 148 (DLPG) are G3 motif. Residues 145-149 (DLPGI) and 214-217 (TKPD) each bind GTP. Residues 214–217 (TKPD) form a G4 motif region. The G5 motif stretch occupies residues 246-249 (RCRG). Residues 546–637 (LREMRLHLKS…PLGHLLEVTF (92 aa)) enclose the GED domain.

The protein belongs to the TRAFAC class dynamin-like GTPase superfamily. Dynamin/Fzo/YdjA family.

The protein resides in the cytoplasm. This chain is Interferon-induced GTP-binding protein MxA (mxa), found in Danio rerio (Zebrafish).